A 1348-amino-acid chain; its full sequence is Phosphoribosylformylglycinamidine synthase (1348 aa).

ATP is bound by residues 300 to 311 and alanine 701; that span reads GAATGAGGEIRD. Mg(2+) contacts are provided by aspartate 702, glutamate 741, asparagine 745, and aspartate 941. Residue serine 943 participates in ATP binding. The 250-residue stretch at 1099 to 1348 folds into the Glutamine amidotransferase type-1 domain; it reads VAILREQGVN…MFRNARVWCG (250 aa). Cysteine 1192 acts as the Nucleophile in catalysis. Active-site residues include histidine 1313 and glutamate 1315.

This sequence in the N-terminal section; belongs to the FGAMS family. In terms of assembly, monomer.

The protein resides in the cytoplasm. It catalyses the reaction N(2)-formyl-N(1)-(5-phospho-beta-D-ribosyl)glycinamide + L-glutamine + ATP + H2O = 2-formamido-N(1)-(5-O-phospho-beta-D-ribosyl)acetamidine + L-glutamate + ADP + phosphate + H(+). It functions in the pathway purine metabolism; IMP biosynthesis via de novo pathway; 5-amino-1-(5-phospho-D-ribosyl)imidazole from N(2)-formyl-N(1)-(5-phospho-D-ribosyl)glycinamide: step 1/2. In terms of biological role, phosphoribosylformylglycinamidine synthase involved in the purines biosynthetic pathway. Catalyzes the ATP-dependent conversion of formylglycinamide ribonucleotide (FGAR) and glutamine to yield formylglycinamidine ribonucleotide (FGAM) and glutamate. This is Phosphoribosylformylglycinamidine synthase from Xanthomonas campestris pv. campestris (strain ATCC 33913 / DSM 3586 / NCPPB 528 / LMG 568 / P 25).